Reading from the N-terminus, the 185-residue chain is Ribosome-recycling factor (185 aa).

The protein belongs to the RRF family.

Its subcellular location is the cytoplasm. In terms of biological role, responsible for the release of ribosomes from messenger RNA at the termination of protein biosynthesis. May increase the efficiency of translation by recycling ribosomes from one round of translation to another. The sequence is that of Ribosome-recycling factor from Aliivibrio fischeri (strain ATCC 700601 / ES114) (Vibrio fischeri).